The following is a 172-amino-acid chain: Putative phosphoesterase BCE_1348 (172 aa).

The active-site Proton donor is His34. 2 consecutive short sequence motifs (HXTX) follow at residues 34–37 and 115–118; these read HITL and HLTI. His115 acts as the Proton acceptor in catalysis.

This sequence belongs to the 2H phosphoesterase superfamily. YjcG family.

The polypeptide is Putative phosphoesterase BCE_1348 (Bacillus cereus (strain ATCC 10987 / NRS 248)).